Consider the following 233-residue polypeptide: Aspartate/glutamate leucyltransferase (233 aa).

The protein belongs to the R-transferase family. Bpt subfamily.

It localises to the cytoplasm. The catalysed reaction is N-terminal L-glutamyl-[protein] + L-leucyl-tRNA(Leu) = N-terminal L-leucyl-L-glutamyl-[protein] + tRNA(Leu) + H(+). It carries out the reaction N-terminal L-aspartyl-[protein] + L-leucyl-tRNA(Leu) = N-terminal L-leucyl-L-aspartyl-[protein] + tRNA(Leu) + H(+). Functionally, functions in the N-end rule pathway of protein degradation where it conjugates Leu from its aminoacyl-tRNA to the N-termini of proteins containing an N-terminal aspartate or glutamate. This is Aspartate/glutamate leucyltransferase from Vibrio parahaemolyticus serotype O3:K6 (strain RIMD 2210633).